We begin with the raw amino-acid sequence, 641 residues long: Chaperone protein HtpG (641 aa).

The segment at 1–351 (MTQSVHAETH…SNDLPLNVSR (351 aa)) is a; substrate-binding. The tract at residues 352 to 568 (EILQDNKVTV…AHGMSTQMIK (217 aa)) is b. Residues 569 to 641 (LMRAAGQPVP…SRINRLLLQA (73 aa)) are c.

The protein belongs to the heat shock protein 90 family. As to quaternary structure, homodimer.

It is found in the cytoplasm. Its function is as follows. Molecular chaperone. Has ATPase activity. The chain is Chaperone protein HtpG from Aeromonas hydrophila subsp. hydrophila (strain ATCC 7966 / DSM 30187 / BCRC 13018 / CCUG 14551 / JCM 1027 / KCTC 2358 / NCIMB 9240 / NCTC 8049).